The chain runs to 371 residues: Flagellar P-ring protein (371 aa).

An N-terminal signal peptide occupies residues methionine 1–alanine 28.

The protein belongs to the FlgI family. In terms of assembly, the basal body constitutes a major portion of the flagellar organelle and consists of four rings (L,P,S, and M) mounted on a central rod.

The protein localises to the periplasm. It localises to the bacterial flagellum basal body. In terms of biological role, assembles around the rod to form the L-ring and probably protects the motor/basal body from shearing forces during rotation. This Anaeromyxobacter dehalogenans (strain 2CP-C) protein is Flagellar P-ring protein.